The primary structure comprises 419 residues: Serine hydroxymethyltransferase (419 aa).

(6S)-5,6,7,8-tetrahydrofolate contacts are provided by residues L121 and 125–127 (GHL). K230 is modified (N6-(pyridoxal phosphate)lysine). 355–357 (SPF) provides a ligand contact to (6S)-5,6,7,8-tetrahydrofolate.

This sequence belongs to the SHMT family. As to quaternary structure, homodimer. Pyridoxal 5'-phosphate serves as cofactor.

The protein localises to the cytoplasm. The enzyme catalyses (6R)-5,10-methylene-5,6,7,8-tetrahydrofolate + glycine + H2O = (6S)-5,6,7,8-tetrahydrofolate + L-serine. It participates in one-carbon metabolism; tetrahydrofolate interconversion. The protein operates within amino-acid biosynthesis; glycine biosynthesis; glycine from L-serine: step 1/1. Functionally, catalyzes the reversible interconversion of serine and glycine with tetrahydrofolate (THF) serving as the one-carbon carrier. This reaction serves as the major source of one-carbon groups required for the biosynthesis of purines, thymidylate, methionine, and other important biomolecules. Also exhibits THF-independent aldolase activity toward beta-hydroxyamino acids, producing glycine and aldehydes, via a retro-aldol mechanism. The protein is Serine hydroxymethyltransferase of Streptococcus equi subsp. equi (strain 4047).